Consider the following 172-residue polypeptide: Large ribosomal subunit protein uL10 (172 aa).

This sequence belongs to the universal ribosomal protein uL10 family. In terms of assembly, part of the ribosomal stalk of the 50S ribosomal subunit. The N-terminus interacts with L11 and the large rRNA to form the base of the stalk. The C-terminus forms an elongated spine to which L12 dimers bind in a sequential fashion forming a multimeric L10(L12)X complex.

In terms of biological role, forms part of the ribosomal stalk, playing a central role in the interaction of the ribosome with GTP-bound translation factors. The protein is Large ribosomal subunit protein uL10 of Chelativorans sp. (strain BNC1).